The following is a 162-amino-acid chain: Protein-export protein SecB (162 aa).

The protein belongs to the SecB family. In terms of assembly, homotetramer, a dimer of dimers. One homotetramer interacts with 1 SecA dimer.

The protein localises to the cytoplasm. Functionally, one of the proteins required for the normal export of preproteins out of the cell cytoplasm. It is a molecular chaperone that binds to a subset of precursor proteins, maintaining them in a translocation-competent state. It also specifically binds to its receptor SecA. The sequence is that of Protein-export protein SecB from Pseudoalteromonas translucida (strain TAC 125).